We begin with the raw amino-acid sequence, 331 residues long: Putative ankyrin repeat protein FPV012 (331 aa).

ANK repeat units lie at residues 11–40 (DGYT…NPNT), 44–73 (DSYT…NVDK), 77–106 (DGYT…NPNY), and 110–139 (YGIT…NCNQ).

The polypeptide is Putative ankyrin repeat protein FPV012 (Vertebrata (FPV)).